Consider the following 607-residue polypeptide: MDTKIGSIDACNPTNHDIGGPPNGGVSTVQNTSPLHSTTVSPCDATLGRYLARRLVEIGVTDVFSVPGDFNLTLLDHLIAEPNLKLIGCCNELNAGYAADGYARSRGVGACVVTFTVGGLSVLNAIAGAYSENLPLICIVGGPNSNDYGTNRILHHTIGLPDFTQELRCFQAVTCFQAVINNLEEAHELIDTAISTALKESKPVYISISCNLPAIPLPTFSRHPVPFMLPMKVSNQIGLDAAVEAAAEFLNKAVKPVLVGGPKMRVAKAADAFVELADASGYGLAVMPSAKGQVPEHHKHFIGTYWGAVSTAFCAEIVESADAYLFAGPIFNDYSSVGYSLLLKKEKAIIVQPDRVTIGNGPAFGCVLMKDFLSELAKRIKHNNTSYENYHRIYVPEGKPLRDNPNESLRVNVLFQHIQNMLSSESAVLAETGDSWFNCQKLKLPEGCGYEFQMQYGSIGWSVGATLGYAQAMPNRRVIACIGDGSFQVTAQDVSTMIRCGQKTIIFLINNGGYTIEVEIHDGPYNVIKNWNYTAFVEAIHNGEGKCWTAKVRCEEELVKAINTATNEEKESFCFIEVIVHKDDTSKELLEWGSRVSAANSRPPNPQ.

Residues 1 to 22 (MDTKIGSIDACNPTNHDIGGPP) are disordered. Positions 69 and 156 each coordinate substrate. Residues 434-516 (DSWFNCQKLK…FLINNGGYTI (83 aa)) form a thiamine pyrophosphate binding region. D484, N511, and G513 together coordinate Mg(2+). Substrate is bound at residue E517.

Belongs to the TPP enzyme family. In terms of assembly, homotetramer. Requires a metal cation as cofactor. It depends on thiamine diphosphate as a cofactor. As to expression, expressed at low levels in roots, shoots, flowers, siliques and seeds.

It catalyses the reaction a 2-oxocarboxylate + H(+) = an aldehyde + CO2. In Arabidopsis thaliana (Mouse-ear cress), this protein is Pyruvate decarboxylase 2 (PDC2).